The chain runs to 345 residues: Phosphoribosylformylglycinamidine cyclo-ligase (345 aa).

The protein belongs to the AIR synthase family.

The protein resides in the cytoplasm. The enzyme catalyses 2-formamido-N(1)-(5-O-phospho-beta-D-ribosyl)acetamidine + ATP = 5-amino-1-(5-phospho-beta-D-ribosyl)imidazole + ADP + phosphate + H(+). It participates in purine metabolism; IMP biosynthesis via de novo pathway; 5-amino-1-(5-phospho-D-ribosyl)imidazole from N(2)-formyl-N(1)-(5-phospho-D-ribosyl)glycinamide: step 2/2. The polypeptide is Phosphoribosylformylglycinamidine cyclo-ligase (Shewanella sp. (strain MR-7)).